A 571-amino-acid polypeptide reads, in one-letter code: Proline--tRNA ligase (571 aa).

It belongs to the class-II aminoacyl-tRNA synthetase family. ProS type 1 subfamily. Homodimer.

It localises to the cytoplasm. The enzyme catalyses tRNA(Pro) + L-proline + ATP = L-prolyl-tRNA(Pro) + AMP + diphosphate. Catalyzes the attachment of proline to tRNA(Pro) in a two-step reaction: proline is first activated by ATP to form Pro-AMP and then transferred to the acceptor end of tRNA(Pro). As ProRS can inadvertently accommodate and process non-cognate amino acids such as alanine and cysteine, to avoid such errors it has two additional distinct editing activities against alanine. One activity is designated as 'pretransfer' editing and involves the tRNA(Pro)-independent hydrolysis of activated Ala-AMP. The other activity is designated 'posttransfer' editing and involves deacylation of mischarged Ala-tRNA(Pro). The misacylated Cys-tRNA(Pro) is not edited by ProRS. This chain is Proline--tRNA ligase, found in Vibrio atlanticus (strain LGP32) (Vibrio splendidus (strain Mel32)).